A 427-amino-acid chain; its full sequence is C4-dicarboxylate transport protein (427 aa).

Transmembrane regions (helical) follow at residues 5 to 25, 44 to 64, 76 to 96, 142 to 162, 184 to 206, 222 to 242, 307 to 327, 330 to 350, and 352 to 372; these read IFSS…FLGH, LIKM…IAGM, IALL…LCVV, IGAF…LFGF, VIFG…AMAF, LIAC…GSIA, IYLT…LDLF, ITLL…TGSG, and IVLA…LALI.

This sequence belongs to the dicarboxylate/amino acid:cation symporter (DAACS) (TC 2.A.23) family.

Its subcellular location is the cell inner membrane. Its function is as follows. Responsible for the transport of dicarboxylates such as succinate, fumarate, and malate from the periplasm across the membrane. In Aeromonas salmonicida (strain A449), this protein is C4-dicarboxylate transport protein.